A 314-amino-acid chain; its full sequence is Methionyl-tRNA formyltransferase (314 aa).

Residue Ser112–Pro115 coordinates (6S)-5,6,7,8-tetrahydrofolate.

Belongs to the Fmt family.

It catalyses the reaction L-methionyl-tRNA(fMet) + (6R)-10-formyltetrahydrofolate = N-formyl-L-methionyl-tRNA(fMet) + (6S)-5,6,7,8-tetrahydrofolate + H(+). Functionally, attaches a formyl group to the free amino group of methionyl-tRNA(fMet). The formyl group appears to play a dual role in the initiator identity of N-formylmethionyl-tRNA by promoting its recognition by IF2 and preventing the misappropriation of this tRNA by the elongation apparatus. The protein is Methionyl-tRNA formyltransferase of Legionella pneumophila (strain Paris).